The primary structure comprises 158 residues: tRNA (cytidine(34)-2'-O)-methyltransferase (158 aa).

Gly-103, Ile-123, and Ser-131 together coordinate S-adenosyl-L-methionine.

This sequence belongs to the class IV-like SAM-binding methyltransferase superfamily. RNA methyltransferase TrmH family. TrmL subfamily. In terms of assembly, homodimer.

Its subcellular location is the cytoplasm. It catalyses the reaction cytidine(34) in tRNA + S-adenosyl-L-methionine = 2'-O-methylcytidine(34) in tRNA + S-adenosyl-L-homocysteine + H(+). The enzyme catalyses 5-carboxymethylaminomethyluridine(34) in tRNA(Leu) + S-adenosyl-L-methionine = 5-carboxymethylaminomethyl-2'-O-methyluridine(34) in tRNA(Leu) + S-adenosyl-L-homocysteine + H(+). Methylates the ribose at the nucleotide 34 wobble position in the two leucyl isoacceptors tRNA(Leu)(CmAA) and tRNA(Leu)(cmnm5UmAA). Catalyzes the methyl transfer from S-adenosyl-L-methionine to the 2'-OH of the wobble nucleotide. The chain is tRNA (cytidine(34)-2'-O)-methyltransferase from Ancylobacter novellus (strain ATCC 8093 / DSM 506 / JCM 20403 / CCM 1077 / IAM 12100 / NBRC 12443 / NCIMB 10456) (Starkeya novella).